A 164-amino-acid polypeptide reads, in one-letter code: Phosphopantetheine adenylyltransferase (164 aa).

Ser9 serves as a coordination point for substrate. Residues 9–10 and His17 contribute to the ATP site; that span reads SF. 3 residues coordinate substrate: Lys41, Leu73, and Arg87. ATP contacts are provided by residues 88 to 90, Glu98, and 123 to 129; these read GLR and YTFLSSS.

It belongs to the bacterial CoaD family. In terms of assembly, homohexamer. Mg(2+) is required as a cofactor.

The protein localises to the cytoplasm. It carries out the reaction (R)-4'-phosphopantetheine + ATP + H(+) = 3'-dephospho-CoA + diphosphate. It participates in cofactor biosynthesis; coenzyme A biosynthesis; CoA from (R)-pantothenate: step 4/5. In terms of biological role, reversibly transfers an adenylyl group from ATP to 4'-phosphopantetheine, yielding dephospho-CoA (dPCoA) and pyrophosphate. In Dictyoglomus thermophilum (strain ATCC 35947 / DSM 3960 / H-6-12), this protein is Phosphopantetheine adenylyltransferase.